A 239-amino-acid chain; its full sequence is Pyridoxine 5'-phosphate synthase (239 aa).

Asn-7 lines the 3-amino-2-oxopropyl phosphate pocket. 9–10 is a binding site for 1-deoxy-D-xylulose 5-phosphate; that stretch reads DH. Arg-18 contacts 3-amino-2-oxopropyl phosphate. Residue His-43 is the Proton acceptor of the active site. Residues Arg-45 and His-50 each contribute to the 1-deoxy-D-xylulose 5-phosphate site. Glu-70 functions as the Proton acceptor in the catalytic mechanism. Residue Thr-100 coordinates 1-deoxy-D-xylulose 5-phosphate. Catalysis depends on His-192, which acts as the Proton donor. Residues Gly-193 and 214-215 each bind 3-amino-2-oxopropyl phosphate; that span reads GH.

It belongs to the PNP synthase family. Homooctamer; tetramer of dimers.

It localises to the cytoplasm. It catalyses the reaction 3-amino-2-oxopropyl phosphate + 1-deoxy-D-xylulose 5-phosphate = pyridoxine 5'-phosphate + phosphate + 2 H2O + H(+). The protein operates within cofactor biosynthesis; pyridoxine 5'-phosphate biosynthesis; pyridoxine 5'-phosphate from D-erythrose 4-phosphate: step 5/5. In terms of biological role, catalyzes the complicated ring closure reaction between the two acyclic compounds 1-deoxy-D-xylulose-5-phosphate (DXP) and 3-amino-2-oxopropyl phosphate (1-amino-acetone-3-phosphate or AAP) to form pyridoxine 5'-phosphate (PNP) and inorganic phosphate. The chain is Pyridoxine 5'-phosphate synthase from Pelagibacter ubique (strain HTCC1062).